The chain runs to 379 residues: Homoserine O-succinyltransferase (379 aa).

The region spanning 51 to 360 (NAVLICHALS…DAPQGHDAFL (310 aa)) is the AB hydrolase-1 domain. The Nucleophile role is filled by Ser157. A substrate-binding site is contributed by Arg227. Active-site residues include Asp323 and His356. Asp357 serves as a coordination point for substrate.

Belongs to the AB hydrolase superfamily. MetX family. In terms of assembly, homodimer.

Its subcellular location is the cytoplasm. It carries out the reaction L-homoserine + succinyl-CoA = O-succinyl-L-homoserine + CoA. The protein operates within amino-acid biosynthesis; L-methionine biosynthesis via de novo pathway; O-succinyl-L-homoserine from L-homoserine: step 1/1. Functionally, transfers a succinyl group from succinyl-CoA to L-homoserine, forming succinyl-L-homoserine. This chain is Homoserine O-succinyltransferase, found in Pseudomonas savastanoi pv. phaseolicola (strain 1448A / Race 6) (Pseudomonas syringae pv. phaseolicola (strain 1448A / Race 6)).